The primary structure comprises 700 residues: Putative proline-rich receptor-like protein kinase PERK6 (700 aa).

The disordered stretch occupies residues methionine 1–asparagine 180. At methionine 1–alanine 186 the chain is on the extracellular side. 2 stretches are compositionally biased toward pro residues: residues asparagine 9 to proline 19 and serine 29 to aspartate 47. Residues aspartate 48–asparagine 137 show a composition bias toward low complexity. Asparagine 176 carries N-linked (GlcNAc...) asparagine glycosylation. The chain crosses the membrane as a helical span at residues alanine 187–valine 207. At cysteine 208–histidine 700 the chain is on the cytoplasmic side. The segment at asparagine 249 to serine 315 is disordered. Residues proline 255 to asparagine 265 show a composition bias toward low complexity. The span at serine 266–valine 286 shows a compositional bias: pro residues. The residue at position 326 (threonine 326) is a Phosphothreonine. The region spanning phenylalanine 337–leucine 615 is the Protein kinase domain. ATP-binding positions include leucine 343–valine 351 and lysine 365. Residue tyrosine 410 is modified to Phosphotyrosine. The active-site Proton acceptor is the aspartate 461. A phosphoserine mark is found at serine 465 and serine 494. Residues threonine 495 and threonine 500 each carry the phosphothreonine modification. At tyrosine 508 the chain carries Phosphotyrosine. 2 disordered regions span residues aspartate 616–threonine 642 and glutamate 659–histidine 700. Polar residues predominate over residues alanine 689–histidine 700.

Belongs to the protein kinase superfamily. Ser/Thr protein kinase family. In terms of tissue distribution, mostly expressed in flower buds.

The protein resides in the cell membrane. The catalysed reaction is L-seryl-[protein] + ATP = O-phospho-L-seryl-[protein] + ADP + H(+). It carries out the reaction L-threonyl-[protein] + ATP = O-phospho-L-threonyl-[protein] + ADP + H(+). This chain is Putative proline-rich receptor-like protein kinase PERK6 (PERK6), found in Arabidopsis thaliana (Mouse-ear cress).